The primary structure comprises 235 residues: Uridylate kinase (235 aa).

ATP is bound at residue 9–12 (KLSG). The interval 17–22 (GKDGYG) is involved in allosteric activation by GTP. Gly-51 serves as a coordination point for UMP. Residues Gly-52 and Arg-56 each coordinate ATP. UMP is bound by residues Asp-71 and 132–139 (TGNPYFTT). Thr-159, Tyr-165, and Asp-168 together coordinate ATP.

Belongs to the UMP kinase family. As to quaternary structure, homohexamer.

Its subcellular location is the cytoplasm. The catalysed reaction is UMP + ATP = UDP + ADP. Its pathway is pyrimidine metabolism; CTP biosynthesis via de novo pathway; UDP from UMP (UMPK route): step 1/1. Allosterically activated by GTP. Inhibited by UTP. Its function is as follows. Catalyzes the reversible phosphorylation of UMP to UDP. The sequence is that of Uridylate kinase from Chlorobium luteolum (strain DSM 273 / BCRC 81028 / 2530) (Pelodictyon luteolum).